The primary structure comprises 479 residues: 6-phosphogluconate dehydrogenase, decarboxylating (479 aa).

NADP(+) is bound by residues 9–14 (GLGVMG), 32–34 (NRT), 77–79 (VQA), and Asn105. Substrate-binding positions include Asn105 and 131-133 (SGG). Lys186 serves as the catalytic Proton acceptor. Residue 189 to 190 (HN) coordinates substrate. Residue Glu193 is the Proton donor of the active site. 5 residues coordinate substrate: Tyr194, Lys263, Arg290, Arg454, and His460.

This sequence belongs to the 6-phosphogluconate dehydrogenase family. Homodimer.

It catalyses the reaction 6-phospho-D-gluconate + NADP(+) = D-ribulose 5-phosphate + CO2 + NADPH. The protein operates within carbohydrate degradation; pentose phosphate pathway; D-ribulose 5-phosphate from D-glucose 6-phosphate (oxidative stage): step 3/3. Catalyzes the oxidative decarboxylation of 6-phosphogluconate to ribulose 5-phosphate and CO(2), with concomitant reduction of NADP to NADPH. This Trypanosoma brucei brucei protein is 6-phosphogluconate dehydrogenase, decarboxylating (GND).